The primary structure comprises 300 residues: MPQLPAPTDVTPARKAEILAEALPYIKRFFDKTVVIKYGGNAMTDPHLKDCFARDVVLLKLVGLNPVVVHGGGPQIETLLARVGKKGEFIQGMRVTDAETMEVVEMVLGGQVNKEIVSLINQHGGKAVGLTGKDASFIRAKKLLMQKEDAAPGDVVDVGQVGEITKIDPSLIAFLDQGDFIPVIAPIGVGEAGETYNINADVVAGKLAEILKAEKLVLLTNTPGVLDKAGKLLTGLTPHQIDDLVADGTLSGGMLPKISSALDAARNGVKSVHIIDGRVEHCLLLEILTDHGVGTMIKSK.

Substrate contacts are provided by residues 72–73 (GG), R94, and N197.

Belongs to the acetylglutamate kinase family. ArgB subfamily.

The protein localises to the cytoplasm. The enzyme catalyses N-acetyl-L-glutamate + ATP = N-acetyl-L-glutamyl 5-phosphate + ADP. It participates in amino-acid biosynthesis; L-arginine biosynthesis; N(2)-acetyl-L-ornithine from L-glutamate: step 2/4. Its function is as follows. Catalyzes the ATP-dependent phosphorylation of N-acetyl-L-glutamate. This chain is Acetylglutamate kinase, found in Aromatoleum aromaticum (strain DSM 19018 / LMG 30748 / EbN1) (Azoarcus sp. (strain EbN1)).